The primary structure comprises 308 residues: Olfactory receptor 8D1 (308 aa).

Topologically, residues 1–25 (MTMENYSMAAQFVLDGLTQQAELQL) are extracellular. A glycan (N-linked (GlcNAc...) asparagine) is linked at asparagine 5. A helical transmembrane segment spans residues 26 to 46 (PLFLLFLGIYVVTVVGNLGMI). Over 47–54 (LLIAVSPL) the chain is Cytoplasmic. Residues 55 to 75 (LHTPMYYFLSSLSFVDFCYSS) traverse the membrane as a helical segment. Over 76 to 99 (VITPKMLVNFLGKKNTILYSECMV) the chain is Extracellular. An intrachain disulfide couples cysteine 97 to cysteine 189. The helical transmembrane segment at 100–120 (QLFFFVVFVVAEGYLLTAMAY) threads the bilayer. The Cytoplasmic portion of the chain corresponds to 121–139 (DRYVAICSPLLYNAIMSSW). The helical transmembrane segment at 140-160 (VCSLLVLAAFFLGFLSALTHT) threads the bilayer. At 161–197 (SAMMKLSFCKSHIINHYFCDVLPLLNLSCSNTHLNEL) the chain is on the extracellular side. The N-linked (GlcNAc...) asparagine glycan is linked to asparagine 186. Residues 198-217 (LLFIIAGFNTLVPTLAVAVS) form a helical membrane-spanning segment. Over 218–237 (YAFILYSILHIRSSEGRSKA) the chain is Cytoplasmic. A helical membrane pass occupies residues 238–258 (FGTCSSHLMAVVIFFGSITFM). Residues 259-271 (YFKPPSSNSLDQE) are Extracellular-facing. The chain crosses the membrane as a helical span at residues 272–292 (KVSSVFYTTVIPMLNPLIYSL). Residues 293-308 (RNKDVKKALRKVLVGK) lie on the Cytoplasmic side of the membrane.

This sequence belongs to the G-protein coupled receptor 1 family. In terms of tissue distribution, expressed in the tongue.

The protein localises to the cell membrane. Its function is as follows. Odorant receptor (Potential). May be involved in taste perception. This is Olfactory receptor 8D1 (OR8D1) from Homo sapiens (Human).